A 787-amino-acid polypeptide reads, in one-letter code: Protocadherin beta-15 (787 aa).

Residues 1–26 (MEPAGERFPEQRQVLILLLLLEVTLA) form the signal peptide. Residues 27–690 (GWEPRRYSVM…AQADSLTVYL (664 aa)) lie on the Extracellular side of the membrane. Cadherin domains lie at 35-133 (VMEE…SPEF), 138-242 (ITLK…APEF), 247-347 (YEVQ…FPEL), 352-451 (LTSP…APAF), and 456-561 (YTLF…SPFV). Residues Asn418 and Asn436 are each glycosylated (N-linked (GlcNAc...) asparagine). A glycan (N-linked (GlcNAc...) asparagine) is linked at Asn567. In terms of domain architecture, Cadherin 6 spans 568 to 671 (GSAPCTELVP…LVDGFSQPYL (104 aa)). Residues 691–711 (VVALASVSSLFLFSVLLFVAV) traverse the membrane as a helical segment. The Cytoplasmic segment spans residues 712–787 (RLCRRSRAAS…DSRRKSEFLE (76 aa)).

Its subcellular location is the cell membrane. Functionally, potential calcium-dependent cell-adhesion protein. May be involved in the establishment and maintenance of specific neuronal connections in the brain. The sequence is that of Protocadherin beta-15 (PCDHB15) from Pan troglodytes (Chimpanzee).